A 101-amino-acid chain; its full sequence is Feather keratin Cos2-3 (101 aa).

Ser2 is modified (N-acetylserine).

Belongs to the avian keratin family. The avian keratins (F-ker, S-ker, C-ker and B-ker) are a complex mixture of very similar polypeptides.

The polypeptide is Feather keratin Cos2-3 (Columba livia (Rock dove)).